The primary structure comprises 305 residues: Carbonic anhydrase 5A, mitochondrial (305 aa).

The transit peptide at 1–38 (MLGRNTWKTSAFSFLVEQMWAPLWSRSMRPGRWCSQRS) directs the protein to the mitochondrion. Residues 39–296 (CAWQTSNNTL…LMNRKVWASF (258 aa)) enclose the Alpha-carbonic anhydrase domain. Zn(2+) is bound by residues H130, H132, and H155.

It belongs to the alpha-carbonic anhydrase family. Requires Zn(2+) as cofactor.

It is found in the mitochondrion. The catalysed reaction is hydrogencarbonate + H(+) = CO2 + H2O. Its activity is regulated as follows. Activated by L- and D-histidine. Activated by L- and D-phenylalanine. Activated by L-adrenaline. Inhibited by coumarins, sulfonamide derivatives such as acetazolamide and Foscarnet (phosphonoformate trisodium salt). Activated by histamine. In terms of biological role, mitochondrial carbonic anhydrase that catalyzes the reversible conversion of carbon dioxide to bicarbonate/HCO3. Mitochondria are impermeable to HCO3, and thus this intramitochondrial carbonic anhydrase is pivotal in providing HCO3 for multiple mitochondrial enzymes that catalyze the formation of essential metabolites of intermediary metabolism in the urea and Krebs cycles. The sequence is that of Carbonic anhydrase 5A, mitochondrial from Homo sapiens (Human).